Here is a 601-residue protein sequence, read N- to C-terminus: MTVDRNYIRNFSIVAHIDHGKSTLADRLIQMTGGLETREMKEQVLDSMDIERERGITIKAQTVRLHYKAKNGETYILNLIDTPGHVDFAYEVSRSLAACEGSLLVVDASQGVEAQTLANVYQAIDNSHELVVVLNKVDLPAAEPERVKEQIEDVIGIDTSEAVEISAKTGLGVSDVLEAIVTQLPSPRTGDVNKPLKAMLVDSWYDAYLGVIVLVRVIDGILKKGQIIRMMGTGAKYPVERVGVFTPKMIQVDELGPGEIGFITASIKEVADTRVGDTITEERCPCEEALPGFKPAQPVVFCGLFPIDAADFDDLRAAMGKLRLNDASFSFEVETSAALGFGFRCGFLGLLHLEIIQERLEREFNLDLIATAPSVVYRMNMHDGSVKELHNPADMPDIVKISSIEEPWIRATIMTPDNYLGSVLELCQERRGIQVSLSYVGTRAMVTYDLPLNEVVFDFYDRLKSISKGYASFDYQMRDYTEGDLVKMSILVNGESIDALSMLVHRTIAEKRGRSLCEKLKDLIPQHMFQIPIQAAIGGKIIARETIRALRKDVTAKCYGGDVTRKRKLLEKQKEGKKRMRQFGKVEIPQSAFIQALKMNK.

The region spanning 6-188 (NYIRNFSIVA…AIVTQLPSPR (183 aa)) is the tr-type G domain. Residues 18–23 (DHGKST) and 135–138 (NKVD) each bind GTP.

It belongs to the TRAFAC class translation factor GTPase superfamily. Classic translation factor GTPase family. LepA subfamily.

It is found in the cell inner membrane. It carries out the reaction GTP + H2O = GDP + phosphate + H(+). In terms of biological role, required for accurate and efficient protein synthesis under certain stress conditions. May act as a fidelity factor of the translation reaction, by catalyzing a one-codon backward translocation of tRNAs on improperly translocated ribosomes. Back-translocation proceeds from a post-translocation (POST) complex to a pre-translocation (PRE) complex, thus giving elongation factor G a second chance to translocate the tRNAs correctly. Binds to ribosomes in a GTP-dependent manner. This Bartonella henselae (strain ATCC 49882 / DSM 28221 / CCUG 30454 / Houston 1) (Rochalimaea henselae) protein is Elongation factor 4.